We begin with the raw amino-acid sequence, 292 residues long: Probable starch degradation products transport system permease protein AmyD (292 aa).

A run of 6 helical transmembrane segments spans residues 15–35 (WLFIAPTLLSLIIVVLIPFII), 77–97 (FAVACIVIINVVGLSLAMLVT), 110–130 (FYLPNLIGGLILGFIWNFIFV), 156–176 (FWGLVIVTSWQMIGYVMVIYI), 205–225 (VFPLIAPAFTVSLFITLSNSF), and 260–280 (MAVGQAKAVIMFLIIAVISVI). The 211-residue stretch at 71–281 (IIFTAKFAVA…LIIAVISVIQ (211 aa)) folds into the ABC transmembrane type-1 domain.

The protein belongs to the binding-protein-dependent transport system permease family. MalFG subfamily.

It localises to the cell membrane. Functionally, probably part of a binding-protein-dependent transport system starch degradation products. Probably responsible for the translocation of the substrate across the membrane. This is Probable starch degradation products transport system permease protein AmyD (amyD) from Thermoanaerobacterium thermosulfurigenes (Clostridium thermosulfurogenes).